Here is a 336-residue protein sequence, read N- to C-terminus: MIFSKNSQLILRHQKIFKNKIVFFSGNIEDELPINLLTIKTKIHLQKSQNFLKINNNKNITFYRKLLVSQDTVQDCNILIYYWPKNKSEARFQLFNILSFLPIKSEIFIVGSNSSGVKSAKLILEESIKLKKIDNANHSILMSGILINKTKFKLEKFFKIHIWKNLIIKSLPGVFGHKKIDEGSKFIASTFSEKINGKILDVGCGSGFLSVSILRKSPKCVVTMIDRKLSALESSKATLDANFFKGEVLSSNIYSNIFKKFNMIVSNPPLHDDLKINFDITKKIIFNSKKHLKKNGELRFVTNHCFSYDFYLKKVFSEFHIMKKDNKYKVYQAFLK.

It belongs to the methyltransferase superfamily. RsmC family. In terms of assembly, monomer.

It localises to the cytoplasm. The catalysed reaction is guanosine(1207) in 16S rRNA + S-adenosyl-L-methionine = N(2)-methylguanosine(1207) in 16S rRNA + S-adenosyl-L-homocysteine + H(+). In terms of biological role, specifically methylates the guanine in position 1207 of 16S rRNA in the 30S particle. This chain is Ribosomal RNA small subunit methyltransferase C, found in Buchnera aphidicola subsp. Schizaphis graminum (strain Sg).